We begin with the raw amino-acid sequence, 273 residues long: Glucosamine-6-phosphate deaminase (273 aa).

Catalysis depends on aspartate 72, which acts as the Proton acceptor; for enolization step. Aspartate 141 (for ring-opening step) is an active-site residue. The active-site Proton acceptor; for ring-opening step is the histidine 143. The active-site For ring-opening step is glutamate 148.

It belongs to the glucosamine/galactosamine-6-phosphate isomerase family. Homohexamer.

Its subcellular location is the cytoplasm. The enzyme catalyses alpha-D-glucosamine 6-phosphate + H2O = beta-D-fructose 6-phosphate + NH4(+). It participates in nucleotide-sugar biosynthesis; UDP-N-acetyl-alpha-D-glucosamine biosynthesis; alpha-D-glucosamine 6-phosphate from D-fructose 6-phosphate: step 1/1. Functionally, catalyzes the reversible conversion of alpha-D-glucosamine 6-phosphate (GlcN-6P) into beta-D-fructose 6-phosphate (Fru-6P) and ammonium ion, a regulatory reaction step in de novo uridine diphosphate-N-acetyl-alpha-D-glucosamine (UDP-GlcNAc) biosynthesis via hexosamine pathway. The protein is Glucosamine-6-phosphate deaminase of Drosophila melanogaster (Fruit fly).